We begin with the raw amino-acid sequence, 350 residues long: (S)-tetrahydroprotoberberine N-methyltransferase (350 aa).

Positions 91, 129, 153, 157, 179, 180, and 195 each coordinate S-adenosyl-L-methionine. Residue cysteine 325 is part of the active site.

This sequence belongs to the CFA/CMAS family. Homodimer.

It is found in the cytoplasm. The enzyme catalyses (S)-stylopine + S-adenosyl-L-methionine = (S)-cis-N-methylstylopine + S-adenosyl-L-homocysteine. The catalysed reaction is (S)-tetrahydropalmatine + S-adenosyl-L-methionine = (S)-cis-N-methyltetrahydropalmatine + S-adenosyl-L-homocysteine. It carries out the reaction (S)-canadine + S-adenosyl-L-methionine = (S)-cis-N-methylcanadine + S-adenosyl-L-homocysteine. It catalyses the reaction (S)-scoulerine + S-adenosyl-L-methionine = (S)-cis-N-methylscoulerine + S-adenosyl-L-homocysteine. The protein operates within alkaloid biosynthesis. Functionally, N-methyltransferase with a broad substrate range, accepting protoberberine alkaloids (R,S)-stylopine, (R,S)-nandinine and (R,S)-tetrahydropalmatine, and to a lesser extent (R,S)-canadine, (R,S)-tetrahydrogroenlandicine (cheilanthifoline) and (S)-scoulerine. In Eschscholzia californica (California poppy), this protein is (S)-tetrahydroprotoberberine N-methyltransferase.